Reading from the N-terminus, the 206-residue chain is Peptidyl-tRNA hydrolase (206 aa).

Residue Tyr-14 coordinates tRNA. The active-site Proton acceptor is His-19. TRNA is bound by residues Tyr-64 and Asn-66. The disordered stretch occupies residues 182 to 206 (FNQKNKKKKEKEQPEAATDQLLENK).

Belongs to the PTH family. Monomer.

The protein resides in the cytoplasm. The enzyme catalyses an N-acyl-L-alpha-aminoacyl-tRNA + H2O = an N-acyl-L-amino acid + a tRNA + H(+). In terms of biological role, hydrolyzes ribosome-free peptidyl-tRNAs (with 1 or more amino acids incorporated), which drop off the ribosome during protein synthesis, or as a result of ribosome stalling. Catalyzes the release of premature peptidyl moieties from peptidyl-tRNA molecules trapped in stalled 50S ribosomal subunits, and thus maintains levels of free tRNAs and 50S ribosomes. The polypeptide is Peptidyl-tRNA hydrolase (Desulforamulus reducens (strain ATCC BAA-1160 / DSM 100696 / MI-1) (Desulfotomaculum reducens)).